A 233-amino-acid chain; its full sequence is LOB domain-containing protein 40 (233 aa).

In terms of domain architecture, LOB spans 3-109 (MSCNGCRVLR…VEAVMRGSPV (107 aa)). The segment covering 143-160 (KRRSRGACKEERNVRSLS) has biased composition (basic and acidic residues). The tract at residues 143–183 (KRRSRGACKEERNVRSLSHESSLSHESPVSSEETTTEEPKT) is disordered. A compositionally biased stretch (low complexity) spans 161–175 (HESSLSHESPVSSEE).

It belongs to the LOB domain-containing protein family. In terms of tissue distribution, expressed in roots and flowers.

The sequence is that of LOB domain-containing protein 40 (LBD40) from Arabidopsis thaliana (Mouse-ear cress).